We begin with the raw amino-acid sequence, 121 residues long: Flagellar protein FliT (121 aa).

Positions 1 to 50 are required for homodimerization; it reads MNHAPHLYFAWQQLVDKSQLMLRLATEEQWDELIASEMAYVNAVQEIAHL. Residues 60 to 98 form a fliD binding region; the sequence is MQEQLRPMLRLILDNESKVKQLLQIRMDELAKLVGQSSV.

Belongs to the FliT family. Homodimer. Interacts with FliD and FlhC.

It localises to the cytoplasm. Its subcellular location is the cytosol. Functionally, dual-function protein that regulates the transcription of class 2 flagellar operons and that also acts as an export chaperone for the filament-capping protein FliD. As a transcriptional regulator, acts as an anti-FlhDC factor; it directly binds FlhC, thus inhibiting the binding of the FlhC/FlhD complex to class 2 promoters, resulting in decreased expression of class 2 flagellar operons. As a chaperone, effects FliD transition to the membrane by preventing its premature polymerization, and by directing it to the export apparatus. This chain is Flagellar protein FliT, found in Shigella sonnei (strain Ss046).